Reading from the N-terminus, the 150-residue chain is UPF0178 protein HCH_06960 (150 aa).

This sequence belongs to the UPF0178 family.

This is UPF0178 protein HCH_06960 from Hahella chejuensis (strain KCTC 2396).